The primary structure comprises 467 residues: Cysteine--tRNA ligase (467 aa).

A Zn(2+)-binding site is contributed by Cys29. The 'HIGH' region signature appears at 31–41 (PTVYNYVHIGN). 3 residues coordinate Zn(2+): Cys209, His234, and Glu238. The short motif at 267–271 (KMSKS) is the 'KMSKS' region element. Lys270 contributes to the ATP binding site.

It belongs to the class-I aminoacyl-tRNA synthetase family. In terms of assembly, monomer. Requires Zn(2+) as cofactor.

The protein resides in the cytoplasm. The enzyme catalyses tRNA(Cys) + L-cysteine + ATP = L-cysteinyl-tRNA(Cys) + AMP + diphosphate. The chain is Cysteine--tRNA ligase from Xylella fastidiosa (strain 9a5c).